The following is a 493-amino-acid chain: Galactose-1-phosphate uridylyltransferase (493 aa).

The protein belongs to the galactose-1-phosphate uridylyltransferase type 2 family.

The protein localises to the cytoplasm. It catalyses the reaction alpha-D-galactose 1-phosphate + UDP-alpha-D-glucose = alpha-D-glucose 1-phosphate + UDP-alpha-D-galactose. It functions in the pathway carbohydrate metabolism; galactose metabolism. The sequence is that of Galactose-1-phosphate uridylyltransferase from Streptococcus pneumoniae (strain CGSP14).